Consider the following 257-residue polypeptide: NAD-capped RNA hydrolase NudC (257 aa).

Arg-69 serves as a coordination point for substrate. Cys-98 and Cys-101 together coordinate Zn(2+). Glu-111 is a binding site for substrate. Zn(2+) contacts are provided by Cys-116 and Cys-119. Position 124 (Tyr-124) interacts with substrate. The 124-residue stretch at 125-248 folds into the Nudix hydrolase domain; sequence PQIAPCIIVA…TVARRLIEDT (124 aa). A divalent metal cation-binding residues include Ala-158, Glu-174, and Glu-178. The short motif at 159 to 180 is the Nudix box element; it reads GFVEVGETLEQAVAREVMEESG. 192-199 serves as a coordination point for substrate; the sequence is QPWPFPQS. An a divalent metal cation-binding site is contributed by Glu-219. Ala-241 provides a ligand contact to substrate.

It belongs to the Nudix hydrolase family. NudC subfamily. As to quaternary structure, homodimer. Requires Mg(2+) as cofactor. It depends on Mn(2+) as a cofactor. The cofactor is Zn(2+).

It carries out the reaction a 5'-end NAD(+)-phospho-ribonucleoside in mRNA + H2O = a 5'-end phospho-adenosine-phospho-ribonucleoside in mRNA + beta-nicotinamide D-ribonucleotide + 2 H(+). The enzyme catalyses NAD(+) + H2O = beta-nicotinamide D-ribonucleotide + AMP + 2 H(+). It catalyses the reaction NADH + H2O = reduced beta-nicotinamide D-ribonucleotide + AMP + 2 H(+). Functionally, mRNA decapping enzyme that specifically removes the nicotinamide adenine dinucleotide (NAD) cap from a subset of mRNAs by hydrolyzing the diphosphate linkage to produce nicotinamide mononucleotide (NMN) and 5' monophosphate mRNA. The NAD-cap is present at the 5'-end of some mRNAs and stabilizes RNA against 5'-processing. Has preference for mRNAs with a 5'-end purine. Catalyzes the hydrolysis of a broad range of dinucleotide pyrophosphates. In Citrobacter koseri (strain ATCC BAA-895 / CDC 4225-83 / SGSC4696), this protein is NAD-capped RNA hydrolase NudC.